We begin with the raw amino-acid sequence, 336 residues long: Phosphoribosylformylglycinamidine cyclo-ligase (336 aa).

Belongs to the AIR synthase family.

It is found in the cytoplasm. The enzyme catalyses 2-formamido-N(1)-(5-O-phospho-beta-D-ribosyl)acetamidine + ATP = 5-amino-1-(5-phospho-beta-D-ribosyl)imidazole + ADP + phosphate + H(+). It functions in the pathway purine metabolism; IMP biosynthesis via de novo pathway; 5-amino-1-(5-phospho-D-ribosyl)imidazole from N(2)-formyl-N(1)-(5-phospho-D-ribosyl)glycinamide: step 2/2. The sequence is that of Phosphoribosylformylglycinamidine cyclo-ligase from Caldanaerobacter subterraneus subsp. tengcongensis (strain DSM 15242 / JCM 11007 / NBRC 100824 / MB4) (Thermoanaerobacter tengcongensis).